We begin with the raw amino-acid sequence, 146 residues long: MALLKKINTQVNRIMKNSSLVQNICFDRVPLFIPRLSLTVKYCLAVKLLIYLLYCWYIYSEVPSASSKFRSFTFGCVVVYHNKFFPRFIRTHSINSIRTFSKFQVIILFSIEKVTRSESKNHSYSKTDISDLHQGYNNPPSRFISR.

The helical transmembrane segment at 38-60 threads the bilayer; sequence LTVKYCLAVKLLIYLLYCWYIYS.

It belongs to the UPF0742 family.

The protein resides in the cytoplasm. The protein localises to the nucleus membrane. This is UPF0742 protein SPAC977.02 from Schizosaccharomyces pombe (strain 972 / ATCC 24843) (Fission yeast).